The primary structure comprises 363 residues: Histidinol-phosphate aminotransferase (363 aa).

The residue at position 215 (Lys215) is an N6-(pyridoxal phosphate)lysine.

Belongs to the class-II pyridoxal-phosphate-dependent aminotransferase family. Histidinol-phosphate aminotransferase subfamily. Homodimer. Pyridoxal 5'-phosphate is required as a cofactor.

The catalysed reaction is L-histidinol phosphate + 2-oxoglutarate = 3-(imidazol-4-yl)-2-oxopropyl phosphate + L-glutamate. It functions in the pathway amino-acid biosynthesis; L-histidine biosynthesis; L-histidine from 5-phospho-alpha-D-ribose 1-diphosphate: step 7/9. The chain is Histidinol-phosphate aminotransferase from Buchnera aphidicola subsp. Diuraphis noxia.